Here is a 473-residue protein sequence, read N- to C-terminus: Cysteine--tRNA ligase (473 aa).

Cys-30 contributes to the Zn(2+) binding site. A 'HIGH' region motif is present at residues 32 to 42 (MTVYDYCHIGH). Zn(2+)-binding residues include Cys-213, His-238, and Glu-242. A 'KMSKS' region motif is present at residues 270–274 (KMSKS). Lys-273 is an ATP binding site.

It belongs to the class-I aminoacyl-tRNA synthetase family. In terms of assembly, monomer. Requires Zn(2+) as cofactor.

It is found in the cytoplasm. It catalyses the reaction tRNA(Cys) + L-cysteine + ATP = L-cysteinyl-tRNA(Cys) + AMP + diphosphate. The polypeptide is Cysteine--tRNA ligase (Acinetobacter baumannii (strain ACICU)).